Here is a 324-residue protein sequence, read N- to C-terminus: tRNA dimethylallyltransferase (324 aa).

Residue 17 to 24 (GPTASGKT) participates in ATP binding. A substrate-binding site is contributed by 19–24 (TASGKT). 3 interaction with substrate tRNA regions span residues 42-45 (DSAL), 166-170 (QRIQR), and 251-256 (RCVGYR).

It belongs to the IPP transferase family. As to quaternary structure, monomer. Mg(2+) is required as a cofactor.

The enzyme catalyses adenosine(37) in tRNA + dimethylallyl diphosphate = N(6)-dimethylallyladenosine(37) in tRNA + diphosphate. In terms of biological role, catalyzes the transfer of a dimethylallyl group onto the adenine at position 37 in tRNAs that read codons beginning with uridine, leading to the formation of N6-(dimethylallyl)adenosine (i(6)A). The sequence is that of tRNA dimethylallyltransferase from Burkholderia pseudomallei (strain 668).